The primary structure comprises 696 residues: DNA ligase (696 aa).

NAD(+) contacts are provided by residues 36 to 40, 85 to 86, and Glu-123; these read DAEYD and SL. Residue Lys-125 is the N6-AMP-lysine intermediate of the active site. Residues Arg-146, Glu-181, Lys-319, and Lys-343 each contribute to the NAD(+) site. Cys-437, Cys-440, Cys-455, and Cys-461 together coordinate Zn(2+). Positions 618–696 constitute a BRCT domain; the sequence is PEGTSLAGKT…EDGLKALLGL (79 aa).

Belongs to the NAD-dependent DNA ligase family. LigA subfamily. Requires Mg(2+) as cofactor. Mn(2+) serves as cofactor.

The catalysed reaction is NAD(+) + (deoxyribonucleotide)n-3'-hydroxyl + 5'-phospho-(deoxyribonucleotide)m = (deoxyribonucleotide)n+m + AMP + beta-nicotinamide D-nucleotide.. Functionally, DNA ligase that catalyzes the formation of phosphodiester linkages between 5'-phosphoryl and 3'-hydroxyl groups in double-stranded DNA using NAD as a coenzyme and as the energy source for the reaction. It is essential for DNA replication and repair of damaged DNA. This is DNA ligase from Bordetella pertussis (strain Tohama I / ATCC BAA-589 / NCTC 13251).